The primary structure comprises 356 residues: CLIP domain-containing serine protease C9 (356 aa).

A Clip domain is found at 49 to 94; it reads SCDTPQVIGGKCMNISLCDPAFVHSIAYQEHTPVCQQNAFYRVICC. 4 disulfides stabilise this stretch: Cys50–Cys93, Cys60–Cys83, Cys66–Cys94, and Cys139–Cys155. An N-linked (GlcNAc...) asparagine glycan is attached at Asn62. The Peptidase S1 domain maps to 109–351; it reads IMHGIEAEPG…YFGWIKETVS (243 aa). Residues His154 and Asp194 each act as charge relay system in the active site. Cysteines 258 and 284 form a disulfide. Asn292 carries an N-linked (GlcNAc...) asparagine glycan. The cysteines at positions 300 and 328 are disulfide-linked. The Charge relay system role is filled by Ser304.

It belongs to the peptidase S1 family. CLIP subfamily. In the active form, heterodimer of a p12 subunit and a p30 subunit; disulfide-linked. Post-translationally, secreted as a full-length protein. Following bacterium E.coli infection, proteolytically cleaved into two chains, p12 and p30, which remain covalently linked.

The protein resides in the secreted. Probable serine protease which plays an essential role in the innate immune response against bacteria and protozoa infection by activating the melanization cascade. In the susceptible strain G3, appears to be dispensable for ookinete elimination which occurs by lysis. This is CLIP domain-containing serine protease C9 from Anopheles gambiae (African malaria mosquito).